Reading from the N-terminus, the 1247-residue chain is Nitric oxide synthase (1247 aa).

Positions 13–33 (EVAEGRESSKANHIGEERRGY) are disordered. Position 146 (serine 146) interacts with (6R)-L-erythro-5,6,7,8-tetrahydrobiopterin. Cysteine 224 contributes to the heme b binding site. Glutamine 287, tryptophan 396, tyrosine 397, glutamate 401, and asparagine 406 together coordinate L-arginine. 2 residues coordinate (6R)-L-erythro-5,6,7,8-tetrahydrobiopterin: tryptophan 487 and phenylalanine 500. Tyrosine 515 provides a ligand contact to heme b. Residues 537-557 (PRRKFNFKQIARAVKFTSKLF) form a calmodulin-binding region. The region spanning 567–766 (ATVLYATETG…AFRKWAPEVF (200 aa)) is the Flavodoxin-like domain. 712-743 (VFALGSSAYPNFCAFGKYIDNILGELGGERLM) is a binding site for FMN. The 271-residue stretch at 795–1065 (NTVRYAPVAE…VRSAPSFHMS (271 aa)) folds into the FAD-binding FR-type domain. FAD is bound by residues 855 to 866 (YEPGDHVGIFPA) and 998 to 1008 (LQPRFYSISSS). NADP(+) is bound by residues 1073–1091 (ILIG…WQEW) and 1170–1185 (KGHI…AEHV).

The protein belongs to the NOS family. It depends on heme b as a cofactor. FAD serves as cofactor. FMN is required as a cofactor.

The catalysed reaction is 2 L-arginine + 3 NADPH + 4 O2 + H(+) = 2 L-citrulline + 2 nitric oxide + 3 NADP(+) + 4 H2O. Its activity is regulated as follows. Stimulated by calcium/calmodulin. Its function is as follows. Produces nitric oxide (NO) which is a messenger molecule with diverse functions throughout the body. Nitric oxide limits plasmodium development in the midgut. In Anopheles stephensi (Indo-Pakistan malaria mosquito), this protein is Nitric oxide synthase.